The following is a 442-amino-acid chain: HTH-type transcriptional regulator NorG (442 aa).

The HTH gntR-type domain occupies 2-46 (KIPPQRQLAIQYNVNRVTIIKSIELLEAEGFIYTKVGSGTYVNDY). Residues 6 to 25 (QRQLAIQYNVNRVTIIKSIE) constitute a DNA-binding region (H-T-H motif). Lys288 carries the N6-(pyridoxal phosphate)lysine modification.

It in the C-terminal section; belongs to the class-I pyridoxal-phosphate-dependent aminotransferase family. Requires pyridoxal 5'-phosphate as cofactor.

In terms of biological role, positively regulates the expression of the NorB efflux pump and negatively regulates the expression of the AbcA efflux pump. Binds specifically to the promoters of norA, norB and norC and abcA genes. Could also have an aminotransferase activity. This chain is HTH-type transcriptional regulator NorG (norG), found in Staphylococcus aureus (strain Mu50 / ATCC 700699).